Reading from the N-terminus, the 225-residue chain is Thymidylate kinase (225 aa).

9–16 (GIEGCGKT) contributes to the ATP binding site.

This sequence belongs to the thymidylate kinase family.

The catalysed reaction is dTMP + ATP = dTDP + ADP. Phosphorylation of dTMP to form dTDP in both de novo and salvage pathways of dTTP synthesis. The chain is Thymidylate kinase from Geobacter sp. (strain M21).